Here is a 225-residue protein sequence, read N- to C-terminus: Phosphoenolpyruvate guanylyltransferase (225 aa).

The phosphoenolpyruvate site is built by T150, G166, and S169. Residues 167-186 are disordered; it reads PESARGHANSGARPLNGQWP.

It belongs to the CofC family.

It catalyses the reaction phosphoenolpyruvate + GTP + H(+) = enolpyruvoyl-2-diphospho-5'-guanosine + diphosphate. Its pathway is cofactor biosynthesis; coenzyme F420 biosynthesis. Guanylyltransferase that catalyzes the activation of phosphoenolpyruvate (PEP) as enolpyruvoyl-2-diphospho-5'-guanosine, via the condensation of PEP with GTP. It is involved in the biosynthesis of coenzyme F420, a hydride carrier cofactor. The chain is Phosphoenolpyruvate guanylyltransferase from Rhodococcus erythropolis (strain PR4 / NBRC 100887).